Here is a 431-residue protein sequence, read N- to C-terminus: 4-hydroxy-3-methylbut-2-en-1-yl diphosphate synthase (flavodoxin) (431 aa).

4 residues coordinate [4Fe-4S] cluster: Cys310, Cys313, Cys356, and Glu363.

This sequence belongs to the IspG family. [4Fe-4S] cluster is required as a cofactor.

The enzyme catalyses (2E)-4-hydroxy-3-methylbut-2-enyl diphosphate + oxidized [flavodoxin] + H2O + 2 H(+) = 2-C-methyl-D-erythritol 2,4-cyclic diphosphate + reduced [flavodoxin]. Its pathway is isoprenoid biosynthesis; isopentenyl diphosphate biosynthesis via DXP pathway; isopentenyl diphosphate from 1-deoxy-D-xylulose 5-phosphate: step 5/6. Functionally, converts 2C-methyl-D-erythritol 2,4-cyclodiphosphate (ME-2,4cPP) into 1-hydroxy-2-methyl-2-(E)-butenyl 4-diphosphate. The protein is 4-hydroxy-3-methylbut-2-en-1-yl diphosphate synthase (flavodoxin) of Rhodopseudomonas palustris (strain HaA2).